The following is a 461-amino-acid chain: tRNA modification GTPase MnmE (461 aa).

(6S)-5-formyl-5,6,7,8-tetrahydrofolate is bound by residues arginine 23, glutamate 88, and arginine 127. The TrmE-type G domain occupies 223-382; that stretch reads GLNTVIVGKP…VEEALVEIVY (160 aa). Position 233 (asparagine 233) interacts with K(+). Residues 233-238, 252-258, and 277-280 contribute to the GTP site; these read NVGKSS, TEVPGTT, and DTAG. Serine 237 contacts Mg(2+). Residues threonine 252, valine 254, and threonine 257 each coordinate K(+). Threonine 258 is a Mg(2+) binding site. Lysine 461 contacts (6S)-5-formyl-5,6,7,8-tetrahydrofolate.

It belongs to the TRAFAC class TrmE-Era-EngA-EngB-Septin-like GTPase superfamily. TrmE GTPase family. As to quaternary structure, homodimer. Heterotetramer of two MnmE and two MnmG subunits. The cofactor is K(+).

It localises to the cytoplasm. Its function is as follows. Exhibits a very high intrinsic GTPase hydrolysis rate. Involved in the addition of a carboxymethylaminomethyl (cmnm) group at the wobble position (U34) of certain tRNAs, forming tRNA-cmnm(5)s(2)U34. The polypeptide is tRNA modification GTPase MnmE (Alkaliphilus metalliredigens (strain QYMF)).